The primary structure comprises 435 residues: Type A flavoprotein fprA (435 aa).

A zinc metallo-hydrolase region spans residues 48–228; it reads ANGTTYNAYA…PFRSFVAQVL (181 aa). Histidine 98, glutamate 100, aspartate 102, histidine 167, aspartate 186, and histidine 243 together coordinate Fe cation. In terms of domain architecture, Flavodoxin-like spans 276-415; sequence LLIFYVSAYR…EGRAFGRRLA (140 aa).

The protein in the N-terminal section; belongs to the zinc metallo-hydrolase group 3 family. In terms of assembly, homodimer. FMN serves as cofactor. The cofactor is Fe cation.

Its function is as follows. Low-potential electron donor to a number of redox enzymes. The protein is Type A flavoprotein fprA (fprA) of Rhodobacter capsulatus (Rhodopseudomonas capsulata).